The primary structure comprises 249 residues: Coat protein (249 aa).

The tract at residues 1-28 (MVDSKKTETPQVVDASKKAENSKTSQAG) is disordered.

The protein belongs to the potexvirus capsid protein family.

Its subcellular location is the virion. Functionally, required for genome encapsidation. Forms ribonucleoprotein complexes along with TGB1 helicase and viral RNA. This is Coat protein from Solanum tuberosum (Potato).